The sequence spans 273 residues: Small ribosomal subunit protein uS2 (273 aa).

Positions 244-273 (SDEEANSSAEENENRQEDLLAKKYDSSEAN) are disordered. The span at 255–273 (NENRQEDLLAKKYDSSEAN) shows a compositional bias: basic and acidic residues.

It belongs to the universal ribosomal protein uS2 family.

The chain is Small ribosomal subunit protein uS2 from Chlamydia felis (strain Fe/C-56) (Chlamydophila felis).